The primary structure comprises 414 residues: Serine hydroxymethyltransferase (414 aa).

(6S)-5,6,7,8-tetrahydrofolate-binding positions include leucine 121 and 125–127; that span reads GHL. Lysine 229 is modified (N6-(pyridoxal phosphate)lysine).

The protein belongs to the SHMT family. As to quaternary structure, homodimer. Requires pyridoxal 5'-phosphate as cofactor.

It localises to the cytoplasm. The catalysed reaction is (6R)-5,10-methylene-5,6,7,8-tetrahydrofolate + glycine + H2O = (6S)-5,6,7,8-tetrahydrofolate + L-serine. It functions in the pathway one-carbon metabolism; tetrahydrofolate interconversion. It participates in amino-acid biosynthesis; glycine biosynthesis; glycine from L-serine: step 1/1. Catalyzes the reversible interconversion of serine and glycine with tetrahydrofolate (THF) serving as the one-carbon carrier. This reaction serves as the major source of one-carbon groups required for the biosynthesis of purines, thymidylate, methionine, and other important biomolecules. Also exhibits THF-independent aldolase activity toward beta-hydroxyamino acids, producing glycine and aldehydes, via a retro-aldol mechanism. The sequence is that of Serine hydroxymethyltransferase from Herminiimonas arsenicoxydans.